Here is a 150-residue protein sequence, read N- to C-terminus: NADH-quinone oxidoreductase subunit A (150 aa).

Transmembrane regions (helical) follow at residues 14–34, 70–90, and 98–118; these read WAFAVFLIGALGLCSLMLLGA, LVAMFFVIFDVEALFLYAWAV, and LGFIEAAVFIAILLAGLFYLV.

Belongs to the complex I subunit 3 family. In terms of assembly, NDH-1 is composed of 13 different subunits. Subunits NuoA, H, J, K, L, M, N constitute the membrane sector of the complex.

It is found in the cell inner membrane. It catalyses the reaction a quinone + NADH + 5 H(+)(in) = a quinol + NAD(+) + 4 H(+)(out). In terms of biological role, NDH-1 shuttles electrons from NADH, via FMN and iron-sulfur (Fe-S) centers, to quinones in the respiratory chain. The immediate electron acceptor for the enzyme in this species is believed to be ubiquinone. Couples the redox reaction to proton translocation (for every two electrons transferred, four hydrogen ions are translocated across the cytoplasmic membrane), and thus conserves the redox energy in a proton gradient. The sequence is that of NADH-quinone oxidoreductase subunit A from Proteus mirabilis (strain HI4320).